The sequence spans 118 residues: Small ribosomal subunit protein uS13 (118 aa).

It belongs to the universal ribosomal protein uS13 family. As to quaternary structure, part of the 30S ribosomal subunit. Forms a loose heterodimer with protein S19. Forms two bridges to the 50S subunit in the 70S ribosome.

Its function is as follows. Located at the top of the head of the 30S subunit, it contacts several helices of the 16S rRNA. In the 70S ribosome it contacts the 23S rRNA (bridge B1a) and protein L5 of the 50S subunit (bridge B1b), connecting the 2 subunits; these bridges are implicated in subunit movement. Contacts the tRNAs in the A and P-sites. This chain is Small ribosomal subunit protein uS13, found in Carsonella ruddii (strain PV).